The sequence spans 660 residues: MDGLVAQCSARLLQQEREIKALTAEIDRLKNCGCLEASPSLEQLREENLKLKYRLNILRRSLQEERRKPTKNMININSRLQEVFGCAIRAAYPDLENPPLIVTPSQQPKFGDYQCNSAMGISQMLKAKEQKVSPREIAENITKHLPNNKYIDKVEIAGPGFINVHLRKDFVSEQLTSLLVNGVQLPVLGDKEKVIVDFSSPNIAKEMHVGHLRSTIIGESMSRLFEFAGYDVLRLNHVGDWGTQFGMLIAHLQDKFPDYLTVSPPIGDLQAFYKESKKRFDADEEFKKRAYQCVVLLQSKNPDIMKAWNLICDVSREEFKKIYDALDITLIERGESFYQDRMKDIVKEFEDKGFVQVDDGRKIVFVPGCSVPLTIVKSDGGYTYDTSDLAAIKQRLFEEKANKIIYVVDNGQAIHFQTIFAAAQMIGWYDPKVTLVTHVGFGVVLGEDKKKFKTRSGETVRLMDLLEEGLKRSMDKLKEKERDKVLTEEELKAAQTSVAYGCIKYADLSHNRLNDYIFSFDKMLDDRGNTAAYLLYAFTRIRSIARLANIDEAMLQRAARETKIILDHEKEWKLGRCILRFPEILQKILDDLFLHTLCDYIYELATTFTEFYDSCYCVEKDRQTGKVLKVNMWRMLLCEAVAAVMAKGFDILGIKPVQRM.

Met-1 carries the post-translational modification N-acetylmethionine. The could be involved in the assembly of the multisynthetase complex stretch occupies residues 1–72 (MDGLVAQCSA…QEERRKPTKN (72 aa)). Residues 200-202 (SPN), His-211, Tyr-384, Asp-388, and Gln-412 each bind L-arginine. The 'HIGH' region signature appears at 201–212 (PNIAKEMHVGHL). The segment at 529–543 (NTAAYLLYAFTRIRS) is interaction with tRNA.

Belongs to the class-I aminoacyl-tRNA synthetase family. Interacts (via N-terminus) with AIMP1 (via N-terminus); this stimulates its catalytic activity. Interacts (via N-terminus) with LARS2 (via C-terminus). Monomer. Part of a multisubunit complex that groups tRNA ligases for Arg (RARS1), Asp (DARS1), Gln (QARS1), Ile (IARS1), Leu (LARS1), Lys (KARS1), Met (MARS1) the bifunctional ligase for Glu and Pro (EPRS1) and the auxiliary subunits AIMP1/p43, AIMP2/p38 and EEF1E1/p18. Interacts with QARS1. Part of a complex composed of RARS1, QARS1 and AIMP1.

The protein resides in the cytoplasm. The protein localises to the cytosol. It carries out the reaction tRNA(Arg) + L-arginine + ATP = L-arginyl-tRNA(Arg) + AMP + diphosphate. Its function is as follows. Forms part of a macromolecular complex that catalyzes the attachment of specific amino acids to cognate tRNAs during protein synthesis. Modulates the secretion of AIMP1 and may be involved in generation of the inflammatory cytokine EMAP2 from AIMP1. The polypeptide is Arginine--tRNA ligase, cytoplasmic (Rars1) (Mus musculus (Mouse)).